The chain runs to 1237 residues: Anion exchange protein 2 (1237 aa).

A disordered region spans residues 1 to 237 (MSSAPRRPAS…SYNLQERRRI (237 aa)). Over 1 to 704 (MSSAPRRPAS…DFRDALDPQC (704 aa)) the chain is Cytoplasmic. 2 stretches are compositionally biased toward basic and acidic residues: residues 37–49 (ELHR…RFEE) and 58–75 (GGEE…EYHR). 2 stretches are compositionally biased toward basic residues: residues 76–85 (QSSHHIHHPL) and 94–110 (RRRK…RRRP). Phosphoserine occurs at positions 113, 132, 144, 170, and 172. Acidic residues predominate over residues 120–133 (TIEEGEEDEDEASE). The segment covering 137–151 (ARAPTQPSPASTPSS) has biased composition (low complexity). Residues 205–215 (GTAGGDDGGAS) are compositionally biased toward gly residues. Position 239 is a phosphoserine (S239). A Phosphothreonine modification is found at T253. K270 is subject to N6-methyllysine. Residues 286-316 (RKNAKGSVQSGREGREPGPTPRARPRAPHKP) are disordered. Position 439 is a phosphoserine (S439). The interval 445-466 (SLLGHHHGQGAESDPHVTEPLI) is disordered. The interval 704–1237 (CLAAVIFIYF…DEYNEMPMPV (534 aa)) is membrane (anion exchange). 4 helical membrane-spanning segments follow: residues 705-725 (LAAV…FGGL), 750-770 (FCLL…LLVF), 792-812 (IGFW…SFLV), and 822-842 (IFAF…LVKI). Topologically, residues 843-893 (FQEHPLHGCSVSNSSEADSGDNATWAGTRVTLGLGNGSSAGPAGQGRPRGQ) are extracellular. N-linked (GlcNAc...) asparagine glycosylation is found at N855, N864, and N878. The chain crosses the membrane as a helical span at residues 894–914 (PNTALLSLVLMAGTFFIAFFL). Over 915 to 929 (RKFKNGRFFPGRVRR) the chain is Cytoplasmic. The next 5 helical transmembrane spans lie at 930-950 (VIGD…DYSI), 985-1005 (FPVW…ILIF), 1032-1052 (LLLI…WLAA), 1086-1106 (RVTG…GDLL), and 1109-1129 (IPLA…LNGI). C1169 carries S-palmitoyl cysteine lipidation. A helical membrane pass occupies residues 1170–1190 (LALLWAVMSTAASLAFPFILI).

This sequence belongs to the anion exchanger (TC 2.A.31) family.

The protein localises to the apical cell membrane. It localises to the basolateral cell membrane. It carries out the reaction hydrogencarbonate(in) + chloride(out) = hydrogencarbonate(out) + chloride(in). Functionally, sodium-independent anion exchanger which mediates the electroneutral exchange of chloride for bicarbonate ions across the cell membrane. Plays an important role in osteoclast differentiation and function. Regulates bone resorption and calpain-dependent actin cytoskeleton organization in osteoclasts via anion exchange-dependent control of pH. Essential for intracellular pH regulation in CD8(+) T-cells upon CD3 stimulation, modulating CD8(+) T-cell response. The sequence is that of Anion exchange protein 2 (SLC4A2) from Equus caballus (Horse).